Here is a 147-residue protein sequence, read N- to C-terminus: MADFDAVLKCWGPVEADYTTIGGLVLTRLFKEHPDTQKLFPKFAGIAQADLAGNAAISAHGATVLKKLGELLKAKGSHASILKPMANSHATKHKIPINNFKLISEVLVKVMQEKAGLDAGGQTALRNVMGIIIADLEANYKELGFTG.

Positions 2-141 constitute a Globin domain; that stretch reads ADFDAVLKCW…IIADLEANYK (140 aa). His-60 serves as a coordination point for nitrite. Residue His-60 coordinates O2. His-89 is a binding site for heme b.

It belongs to the globin family. As to quaternary structure, monomeric.

It is found in the cytoplasm. The protein resides in the sarcoplasm. It catalyses the reaction Fe(III)-heme b-[protein] + nitric oxide + H2O = Fe(II)-heme b-[protein] + nitrite + 2 H(+). The enzyme catalyses H2O2 + AH2 = A + 2 H2O. Monomeric heme protein which primary function is to store oxygen and facilitate its diffusion within muscle tissues. Reversibly binds oxygen through a pentacoordinated heme iron and enables its timely and efficient release as needed during periods of heightened demand. Depending on the oxidative conditions of tissues and cells, and in addition to its ability to bind oxygen, it also has a nitrite reductase activity whereby it regulates the production of bioactive nitric oxide. Under stress conditions, like hypoxia and anoxia, it also protects cells against reactive oxygen species thanks to its pseudoperoxidase activity. This Thunnus alalunga (Albacore) protein is Myoglobin (mb).